Reading from the N-terminus, the 570-residue chain is METENQKTMEESTKRKEEKKKRSRVKQVLADIAKQVDFWFGDANLHKDKFLREQIEKSRDGYVDISLLVSFNKMKKLTTDGKLIARALKSSSVVELDLEGTRIRRKKPLGERPKDEEERTVYVELLPKNVTHSWIERVFGKCGNVVYISIPHYKSTGDPKGFAFVEFETKEQAAKAIEFLNNPPEEAPRKPGIFPKTVKNKPIPSLRVAEEKKKKKKKKGRIKKEESVQAKESAVDSSSSGVCKATKRPRTASEGSEAETPEAPKQPAKKKKKRDKVEASSLPEARAGKRERCSAEDEDCLPPRPKAKKRAQKDGVGQAASEVSKESRDLEFCSTEEEKETDRKGDSLSKVKRKHKKKHKERHKMGEEVIPLRVLSKTEWMDLKKEYLALQKASMASLKKTISQIKLESEMETDCKAPTAGSGQECSTQEKVSAQGPQFVTGVIVKIVSGEPLPGRKQVKDILATISEVVYIDLLEGDTECHARFKTPEDAQAVMNAQTEIRKKHSWNLEVLSGDHEQRYWQKILVDRQAKLNQPREKKRGTEKLITKAEKIRLAKTQQASQHIRFSEYD.

Met-1 carries the N-acetylmethionine modification. The span at 1 to 16 (METENQKTMEESTKRK) shows a compositional bias: basic and acidic residues. Disordered stretches follow at residues 1 to 24 (METE…KRSR) and 180 to 364 (LNNP…ERHK). The HTH La-type RNA-binding domain maps to 22–116 (RSRVKQVLAD…KPLGERPKDE (95 aa)). Residues 119–197 (RTVYVELLPK…PRKPGIFPKT (79 aa)) enclose the RRM domain. A compositionally biased stretch (basic residues) spans 213–222 (KKKKKKKGRI). Residue Lys-231 forms a Glycyl lysine isopeptide (Lys-Gly) (interchain with G-Cter in SUMO2) linkage. Phosphothreonine is present on Thr-251. A phosphoserine mark is found at Ser-253 and Ser-256. Thr-260 carries the post-translational modification Phosphothreonine. Over residues 286-295 (RAGKRERCSA) the composition is skewed to basic and acidic residues. Ser-294 and Ser-334 each carry phosphoserine. At Thr-335 the chain carries Phosphothreonine. Basic and acidic residues predominate over residues 340–349 (ETDRKGDSLS). Ser-347 carries the post-translational modification Phosphoserine. Positions 350-363 (KVKRKHKKKHKERH) are enriched in basic residues. Residue Lys-406 forms a Glycyl lysine isopeptide (Lys-Gly) (interchain with G-Cter in SUMO2) linkage. Residues 438–551 (QFVTGVIVKI…TEKLITKAEK (114 aa)) form the xRRM domain.

The protein belongs to the LARP7 family. As to quaternary structure, core component of the 7SK RNP complex, at least composed of 7SK RNA, LARP7, MEPCE, HEXIM1 (or HEXIM2) and P-TEFb (composed of CDK9 and CCNT1/cyclin-T1). Interacts with METTL16. Interacts with RBM7; upon genotoxic stress this interaction is enhanced, triggering the release of inactive P-TEFb complex from the core, yielding to P-TEFb complex activation. Associates with box C/D small nucleolar ribonucleoprotein (snoRNP) complexes.

It localises to the nucleus. Its subcellular location is the nucleoplasm. RNA-binding protein that specifically binds distinct small nuclear RNA (snRNAs) and regulates their processing and function. Specifically binds the 7SK snRNA (7SK RNA) and acts as a core component of the 7SK ribonucleoprotein (RNP) complex, thereby acting as a negative regulator of transcription elongation by RNA polymerase II. The 7SK RNP complex sequesters the positive transcription elongation factor b (P-TEFb) in a large inactive 7SK RNP complex preventing RNA polymerase II phosphorylation and subsequent transcriptional elongation. The 7SK RNP complex also promotes snRNA gene transcription by RNA polymerase II via interaction with the little elongation complex (LEC). LARP7 specifically binds to the highly conserved 3'-terminal U-rich stretch of 7SK RNA; on stimulation, remains associated with 7SK RNA, whereas P-TEFb is released from the complex. LARP7 also acts as a regulator of mRNA splicing fidelity by promoting U6 snRNA processing. Specifically binds U6 snRNAs and associates with a subset of box C/D RNP complexes: promotes U6 snRNA 2'-O-methylation by facilitating U6 snRNA loading into box C/D RNP complexes. U6 snRNA 2'-O-methylation is required for mRNA splicing fidelity. Binds U6 snRNAs with a 5'-CAGGG-3' sequence motif. U6 snRNA processing is required for spermatogenesis. The polypeptide is La-related protein 7 (Mus musculus (Mouse)).